We begin with the raw amino-acid sequence, 125 residues long: Large ribosomal subunit protein bL20 (125 aa).

It belongs to the bacterial ribosomal protein bL20 family.

Its function is as follows. Binds directly to 23S ribosomal RNA and is necessary for the in vitro assembly process of the 50S ribosomal subunit. It is not involved in the protein synthesizing functions of that subunit. This Rhodospirillum rubrum (strain ATCC 11170 / ATH 1.1.1 / DSM 467 / LMG 4362 / NCIMB 8255 / S1) protein is Large ribosomal subunit protein bL20.